Consider the following 399-residue polypeptide: Succinate--CoA ligase [ADP-forming] subunit beta (399 aa).

An ATP-grasp domain is found at 9-254 (KAVLQPFGVS…ETEEDAKEIE (246 aa)). ATP contacts are provided by residues Lys46, 53–55 (GRG), Glu109, Ser112, and Glu117. Residues Asn209 and Asp223 each coordinate Mg(2+). Residues Asn274 and 331–333 (GIM) contribute to the substrate site.

This sequence belongs to the succinate/malate CoA ligase beta subunit family. As to quaternary structure, heterotetramer of two alpha and two beta subunits. It depends on Mg(2+) as a cofactor.

The enzyme catalyses succinate + ATP + CoA = succinyl-CoA + ADP + phosphate. It carries out the reaction GTP + succinate + CoA = succinyl-CoA + GDP + phosphate. It participates in carbohydrate metabolism; tricarboxylic acid cycle; succinate from succinyl-CoA (ligase route): step 1/1. Succinyl-CoA synthetase functions in the citric acid cycle (TCA), coupling the hydrolysis of succinyl-CoA to the synthesis of either ATP or GTP and thus represents the only step of substrate-level phosphorylation in the TCA. The beta subunit provides nucleotide specificity of the enzyme and binds the substrate succinate, while the binding sites for coenzyme A and phosphate are found in the alpha subunit. The sequence is that of Succinate--CoA ligase [ADP-forming] subunit beta from Rhodopseudomonas palustris (strain BisB18).